The following is a 435-amino-acid chain: Serine carboxypeptidase-like 12 (435 aa).

The N-terminal stretch at M1–S21 is a signal peptide. 3 disulfide bridges follow: C80-C323, C244-C258, and C282-C289. An N-linked (GlcNAc...) asparagine glycan is attached at N101. Residue S176 is part of the active site. N-linked (GlcNAc...) asparagine glycosylation is found at N313, N336, and N344. D360 is a catalytic residue. N376 carries N-linked (GlcNAc...) asparagine glycosylation. Residue H413 is part of the active site. N420 carries N-linked (GlcNAc...) asparagine glycosylation.

The protein belongs to the peptidase S10 family. Expressed in roots.

The protein localises to the secreted. Functionally, probable carboxypeptidase. The polypeptide is Serine carboxypeptidase-like 12 (SCPL12) (Arabidopsis thaliana (Mouse-ear cress)).